A 380-amino-acid polypeptide reads, in one-letter code: Cytochrome b (380 aa).

A run of 4 helical transmembrane segments spans residues 34–54, 78–99, 114–134, and 179–199; these read FGSL…LLAM, WLIR…YLHI, WNTG…GYVL, and FFAL…IHLT. Residues histidine 84 and histidine 98 each coordinate heme b. Residues histidine 183 and histidine 197 each contribute to the heme b site. Histidine 202 serves as a coordination point for a ubiquinone. 4 helical membrane-spanning segments follow: residues 227–247, 289–309, 321–341, and 348–368; these read TKDL…ALFS, LGGV…PFLH, LSQI…WVGS, and FIII…ILFP.

This sequence belongs to the cytochrome b family. The cytochrome bc1 complex contains 11 subunits: 3 respiratory subunits (MT-CYB, CYC1 and UQCRFS1), 2 core proteins (UQCRC1 and UQCRC2) and 6 low-molecular weight proteins (UQCRH/QCR6, UQCRB/QCR7, UQCRQ/QCR8, UQCR10/QCR9, UQCR11/QCR10 and a cleavage product of UQCRFS1). This cytochrome bc1 complex then forms a dimer. Requires heme b as cofactor.

The protein localises to the mitochondrion inner membrane. Component of the ubiquinol-cytochrome c reductase complex (complex III or cytochrome b-c1 complex) that is part of the mitochondrial respiratory chain. The b-c1 complex mediates electron transfer from ubiquinol to cytochrome c. Contributes to the generation of a proton gradient across the mitochondrial membrane that is then used for ATP synthesis. The chain is Cytochrome b (MT-CYB) from Aerodramus vulcanorum (Volcano swiftlet).